A 330-amino-acid polypeptide reads, in one-letter code: DNA primase small subunit PriS (330 aa).

Active-site residues include aspartate 101 and aspartate 103. Positions 116, 119, 128, and 131 each coordinate Zn(2+). Aspartate 235 is an active-site residue.

The protein belongs to the eukaryotic-type primase small subunit family. Heterodimer of a small subunit (PriS) and a large subunit (PriL). Mg(2+) is required as a cofactor. It depends on Mn(2+) as a cofactor.

In terms of biological role, catalytic subunit of DNA primase, an RNA polymerase that catalyzes the synthesis of short RNA molecules used as primers for DNA polymerase during DNA replication. The small subunit contains the primase catalytic core and has DNA synthesis activity on its own. Binding to the large subunit stabilizes and modulates the activity, increasing the rate of DNA synthesis while decreasing the length of the DNA fragments, and conferring RNA synthesis capability. The DNA polymerase activity may enable DNA primase to also catalyze primer extension after primer synthesis. May also play a role in DNA repair. Possesses a template-independent 3'-terminal nucleotidyl transferase activity. This Saccharolobus solfataricus (strain ATCC 35092 / DSM 1617 / JCM 11322 / P2) (Sulfolobus solfataricus) protein is DNA primase small subunit PriS.